The sequence spans 441 residues: Histidinol dehydrogenase (441 aa).

The substrate site is built by threonine 240, glutamine 262, and histidine 265. Zn(2+) contacts are provided by glutamine 262 and histidine 265. Catalysis depends on proton acceptor residues glutamate 332 and histidine 333. Substrate is bound by residues histidine 333, aspartate 366, glutamate 420, and histidine 425. Aspartate 366 provides a ligand contact to Zn(2+). Histidine 425 contacts Zn(2+).

Belongs to the histidinol dehydrogenase family. Requires Zn(2+) as cofactor.

It catalyses the reaction L-histidinol + 2 NAD(+) + H2O = L-histidine + 2 NADH + 3 H(+). It functions in the pathway amino-acid biosynthesis; L-histidine biosynthesis; L-histidine from 5-phospho-alpha-D-ribose 1-diphosphate: step 9/9. In terms of biological role, catalyzes the sequential NAD-dependent oxidations of L-histidinol to L-histidinaldehyde and then to L-histidine. The sequence is that of Histidinol dehydrogenase from Streptomyces avermitilis (strain ATCC 31267 / DSM 46492 / JCM 5070 / NBRC 14893 / NCIMB 12804 / NRRL 8165 / MA-4680).